The chain runs to 192 residues: Ion-translocating oxidoreductase complex subunit A (192 aa).

A run of 6 helical transmembrane segments spans residues 5 to 25, 39 to 59, 72 to 92, 102 to 122, 134 to 154, and 171 to 191; these read ILLL…FLGL, IGMG…AYLV, LRTM…EMVV, LLGI…VALL, IIYG…FASM, and SIAM…TGLV.

This sequence belongs to the NqrDE/RnfAE family. In terms of assembly, the complex is composed of six subunits: RnfA, RnfB, RnfC, RnfD, RnfE and RnfG.

It localises to the cell inner membrane. Its function is as follows. Part of a membrane-bound complex that couples electron transfer with translocation of ions across the membrane. This chain is Ion-translocating oxidoreductase complex subunit A, found in Vibrio vulnificus (strain CMCP6).